We begin with the raw amino-acid sequence, 359 residues long: DNA integrity scanning protein DisA (359 aa).

The DAC domain maps to 7 to 146 (DDIFRATLAA…GRRYVLDGSA (140 aa)). Residues glycine 74, leucine 92, and 105–109 (TRHRT) each bind ATP.

This sequence belongs to the DisA family. Homooctamer. Mg(2+) serves as cofactor.

It carries out the reaction 2 ATP = 3',3'-c-di-AMP + 2 diphosphate. In terms of biological role, participates in a DNA-damage check-point that is active prior to asymmetric division when DNA is damaged. DisA forms globular foci that rapidly scan along the chromosomes during sporulation, searching for lesions. When a lesion is present, DisA pauses at the lesion site. This triggers a cellular response that culminates in a temporary block in sporulation initiation. Also has diadenylate cyclase activity, catalyzing the condensation of 2 ATP molecules into cyclic di-AMP (c-di-AMP). c-di-AMP acts as a signaling molecule that couples DNA integrity with progression of sporulation. The rise in c-di-AMP level generated by DisA while scanning the chromosome, operates as a positive signal that advances sporulation; upon encountering a lesion, the DisA focus arrests at the damaged site and halts c-di-AMP synthesis. The sequence is that of DNA integrity scanning protein DisA from Frankia casuarinae (strain DSM 45818 / CECT 9043 / HFP020203 / CcI3).